The following is a 225-amino-acid chain: NAD(P)H-quinone oxidoreductase subunit K, chloroplastic (225 aa).

[4Fe-4S] cluster-binding residues include C43, C44, C108, and C139.

This sequence belongs to the complex I 20 kDa subunit family. NDH is composed of at least 16 different subunits, 5 of which are encoded in the nucleus. The cofactor is [4Fe-4S] cluster.

It localises to the plastid. The protein resides in the chloroplast thylakoid membrane. It carries out the reaction a plastoquinone + NADH + (n+1) H(+)(in) = a plastoquinol + NAD(+) + n H(+)(out). The catalysed reaction is a plastoquinone + NADPH + (n+1) H(+)(in) = a plastoquinol + NADP(+) + n H(+)(out). In terms of biological role, NDH shuttles electrons from NAD(P)H:plastoquinone, via FMN and iron-sulfur (Fe-S) centers, to quinones in the photosynthetic chain and possibly in a chloroplast respiratory chain. The immediate electron acceptor for the enzyme in this species is believed to be plastoquinone. Couples the redox reaction to proton translocation, and thus conserves the redox energy in a proton gradient. In Vitis vinifera (Grape), this protein is NAD(P)H-quinone oxidoreductase subunit K, chloroplastic.